Here is a 391-residue protein sequence, read N- to C-terminus: Probable FAD-dependent oxidoreductase PA4991 (391 aa).

FAD contacts are provided by residues A17, E36, 44–45 (QS), 49–51 (QGI), and 346–347 (LA).

It belongs to the DAO family. Monomer. It depends on FAD as a cofactor.

Functionally, probably functions as a FAD-dependent oxidoreductase, whose physiological substrate is unknown. Does not display amino-acid oxidase or glycerol-3-phosphate dehydrogenase activities. Is essential for growth of P.aeruginosa in the sputum of cystic fibrosis patients. This Pseudomonas aeruginosa (strain ATCC 15692 / DSM 22644 / CIP 104116 / JCM 14847 / LMG 12228 / 1C / PRS 101 / PAO1) protein is Probable FAD-dependent oxidoreductase PA4991.